Here is a 319-residue protein sequence, read N- to C-terminus: Protein StrN (319 aa).

It functions in the pathway antibiotic biosynthesis; streptomycin biosynthesis. The sequence is that of Protein StrN (strN) from Streptomyces griseus.